Reading from the N-terminus, the 28-residue chain is Peptide 2 (28 aa).

Belongs to the short scorpion toxin superfamily. Potassium channel inhibitor family. Alpha-KTx 09 subfamily. Expressed by the venom gland.

The protein resides in the secreted. Blocks potassium channels. This is Peptide 2 from Hottentotta tamulus sindicus (Scorpion).